A 973-amino-acid polypeptide reads, in one-letter code: Probable outer membrane protein pmp13 (973 aa).

Residues methionine 1–threonine 24 form the signal peptide. Over residues glutamine 284–serine 293 the composition is skewed to polar residues. Residues glutamine 284 to proline 303 form a disordered region. The Autotransporter domain occupies glutamate 691–phenylalanine 973.

This sequence belongs to the PMP outer membrane protein family.

The protein resides in the secreted. It is found in the cell wall. It localises to the cell outer membrane. In Chlamydia pneumoniae (Chlamydophila pneumoniae), this protein is Probable outer membrane protein pmp13 (pmp13).